The sequence spans 95 residues: Aspartyl/glutamyl-tRNA(Asn/Gln) amidotransferase subunit C (95 aa).

This sequence belongs to the GatC family. As to quaternary structure, heterotrimer of A, B and C subunits.

The catalysed reaction is L-glutamyl-tRNA(Gln) + L-glutamine + ATP + H2O = L-glutaminyl-tRNA(Gln) + L-glutamate + ADP + phosphate + H(+). It catalyses the reaction L-aspartyl-tRNA(Asn) + L-glutamine + ATP + H2O = L-asparaginyl-tRNA(Asn) + L-glutamate + ADP + phosphate + 2 H(+). Its function is as follows. Allows the formation of correctly charged Asn-tRNA(Asn) or Gln-tRNA(Gln) through the transamidation of misacylated Asp-tRNA(Asn) or Glu-tRNA(Gln) in organisms which lack either or both of asparaginyl-tRNA or glutaminyl-tRNA synthetases. The reaction takes place in the presence of glutamine and ATP through an activated phospho-Asp-tRNA(Asn) or phospho-Glu-tRNA(Gln). The protein is Aspartyl/glutamyl-tRNA(Asn/Gln) amidotransferase subunit C of Brucella anthropi (strain ATCC 49188 / DSM 6882 / CCUG 24695 / JCM 21032 / LMG 3331 / NBRC 15819 / NCTC 12168 / Alc 37) (Ochrobactrum anthropi).